A 361-amino-acid chain; its full sequence is Phospho-N-acetylmuramoyl-pentapeptide-transferase (361 aa).

10 consecutive transmembrane segments (helical) span residues 27-47 (ILAS…MIRW), 70-90 (GTPT…CLLW), 97-117 (SLWL…VDDY), 134-154 (YFWQ…NASL), 167-187 (TVTW…IVGS), 199-219 (GLAI…AYAS), 236-256 (TGEL…FLWY), 263-283 (VFMG…VAIV), 288-308 (LVLL…ILQV), and 338-358 (KVIV…LATL).

It belongs to the glycosyltransferase 4 family. MraY subfamily. It depends on Mg(2+) as a cofactor.

The protein localises to the cell inner membrane. The catalysed reaction is UDP-N-acetyl-alpha-D-muramoyl-L-alanyl-gamma-D-glutamyl-meso-2,6-diaminopimeloyl-D-alanyl-D-alanine + di-trans,octa-cis-undecaprenyl phosphate = di-trans,octa-cis-undecaprenyl diphospho-N-acetyl-alpha-D-muramoyl-L-alanyl-D-glutamyl-meso-2,6-diaminopimeloyl-D-alanyl-D-alanine + UMP. Its pathway is cell wall biogenesis; peptidoglycan biosynthesis. In terms of biological role, catalyzes the initial step of the lipid cycle reactions in the biosynthesis of the cell wall peptidoglycan: transfers peptidoglycan precursor phospho-MurNAc-pentapeptide from UDP-MurNAc-pentapeptide onto the lipid carrier undecaprenyl phosphate, yielding undecaprenyl-pyrophosphoryl-MurNAc-pentapeptide, known as lipid I. The chain is Phospho-N-acetylmuramoyl-pentapeptide-transferase from Legionella pneumophila (strain Paris).